We begin with the raw amino-acid sequence, 316 residues long: Nucleotide-binding protein NFA_35930 (316 aa).

32–39 lines the ATP pocket; it reads GLSGAGRG. A GTP-binding site is contributed by 83 to 86; sequence DVRS.

It belongs to the RapZ-like family.

In terms of biological role, displays ATPase and GTPase activities. The polypeptide is Nucleotide-binding protein NFA_35930 (Nocardia farcinica (strain IFM 10152)).